Consider the following 125-residue polypeptide: Large ribosomal subunit protein bL12 (125 aa).

Belongs to the bacterial ribosomal protein bL12 family. In terms of assembly, homodimer. Part of the ribosomal stalk of the 50S ribosomal subunit. Forms a multimeric L10(L12)X complex, where L10 forms an elongated spine to which 2 to 4 L12 dimers bind in a sequential fashion. Binds GTP-bound translation factors.

Its function is as follows. Forms part of the ribosomal stalk which helps the ribosome interact with GTP-bound translation factors. Is thus essential for accurate translation. The polypeptide is Large ribosomal subunit protein bL12 (Thermoanaerobacter sp. (strain X514)).